Reading from the N-terminus, the 416-residue chain is Thyroid hormone receptor alpha (416 aa).

A compositionally biased stretch (polar residues) spans 1–13; sequence MEPMSNKQDSNSS. The disordered stretch occupies residues 1-37; that stretch reads MEPMSNKQDSNSSEGDEKGWPDVPKRKRKNSQCSMKS. The interval 1–58 is modulating; sequence MEPMSNKQDSNSSEGDEKGWPDVPKRKRKNSQCSMKSMSALSVSVPGYIPSYLEKDEP. A compositionally biased stretch (basic and acidic residues) spans 15–24; the sequence is GDEKGWPDVP. Zn(2+) contacts are provided by cysteine 59, cysteine 62, cysteine 76, cysteine 79, cysteine 97, cysteine 103, cysteine 113, and cysteine 116. 2 NR C4-type zinc fingers span residues 59–79 and 97–121; these read CVVC…CEGC and CKYE…FKKC. Residues 59–133 constitute a DNA-binding region (nuclear receptor); sequence CVVCGDKATG…VGMAMDLVLD (75 aa). The 245-residue stretch at 169–413 folds into the NR LBD domain; the sequence is AEWELIRMAT…PPLFLEVFED (245 aa). Residue arginine 234 participates in 3,3',5-triiodo-L-thyronine binding.

It belongs to the nuclear hormone receptor family. NR1 subfamily.

Its subcellular location is the nucleus. Its function is as follows. Nuclear hormone receptor that can act as a repressor or activator of transcription. High affinity receptor for thyroid hormones, including triiodothyronine and thyroxine. The protein is Thyroid hormone receptor alpha (thra) of Hippoglossus hippoglossus (Atlantic halibut).